The following is a 352-amino-acid chain: Glutamine synthetase cytosolic isozyme (352 aa).

Residues 19-98 (FIAEYIWIDA…VMCDTYTPAG (80 aa)) enclose the GS beta-grasp domain. A GS catalytic domain is found at 105–352 (KRCNAAKIFS…TSMIAETTIL (248 aa)).

Belongs to the glutamine synthetase family. In terms of assembly, homooctamer.

The protein resides in the cytoplasm. It catalyses the reaction L-glutamate + NH4(+) + ATP = L-glutamine + ADP + phosphate + H(+). In Daucus carota (Wild carrot), this protein is Glutamine synthetase cytosolic isozyme (GLN1).